The following is a 296-amino-acid chain: Myeloid differentiation primary response protein MyD88 (296 aa).

The 56-residue stretch at 54–109 folds into the Death domain; it reads MGFEYLEIRELETRPDPTRSLLDAWQGRSGASVGRLLELLALLDREDILKELKSRI. Residues 110-155 are intermediate domain; it reads EEDCQKYLGKQQNQESEKPLQVARVESSVPQTKELGGITTLDDPLG. The 135-residue stretch at 159–293 folds into the TIR domain; it reads ELFDAFICYC…WFWTRLAKAL (135 aa). S244 is modified (phosphoserine).

As to quaternary structure, homodimer. Also forms heterodimers with TIRAP. Binds to TLR2, TLR4, IRAK1, IRAK2 and IRAK4 via their respective TIR domains. Interacts with IL18R1. Interacts with BMX, IL1RL1, IKBKE and IRF7. Interacts with LRRFIP1 and LRRFIP2; this interaction positively regulates Toll-like receptor (TLR) signaling in response to agonist. Interacts with FLII. LRRFIP1 and LRRFIP2 compete with FLII for MYD88-binding. Interacts with IRF1. Upon IL1B treatment, forms a complex with PELI1, IRAK1, IRAK4 and TRAF6; this complex recruits MAP3K7/TAK1, TAB1 and TAB2 to mediate NF-kappa-B activation. Direct binding of SMAD6 to PELI1 prevents the complex formation and hence negatively regulates IL1R-TLR signaling and eventually NF-kappa-B-mediated gene expression. May interact with PIK3AP1. Interacts (via TIR domain) with DHX9 (via H2A and OB-fold regions); this interaction is direct. Interacts with OTUD4 deubiquitinase; the interaction is direct. Ubiquitinated; undergoes 'Lys-63'-linked polyubiquitination. OTUD4 specifically hydrolyzes 'Lys-63'-linked polyubiquitinated MYD88. Deubiquitinated by USP3 that cleaves 'Lys-63'-linked ubiquitin chains leading to inhibition of MYD88-induced NF-kappa-B signaling. As to expression, detected in bone marrow. Isoform 1 is expressed in testis, kidney, lung, ovary, adrenal gland, provstate, thymus and heart, and weakly in skeletal muscle, liver, spleen and brain. Isoform 2 is mainly expressed in the spleen and weakly in brain.

Its subcellular location is the cytoplasm. The protein resides in the nucleus. Adapter protein involved in the Toll-like receptor and IL-1 receptor signaling pathway in the innate immune response. Acts via IRAK1, IRAK2, IRF7 and TRAF6, leading to NF-kappa-B activation, cytokine secretion and the inflammatory response. Increases IL-8 transcription. Involved in IL-18-mediated signaling pathway. Activates IRF1 resulting in its rapid migration into the nucleus to mediate an efficient induction of IFN-beta, NOS2/INOS, and IL12A genes. Upon TLR8 activation by GU-rich single-stranded RNA (GU-rich RNA) derived from viruses, induces IL1B release through NLRP3 inflammasome activation. MyD88-mediated signaling in intestinal epithelial cells is crucial for maintenance of gut homeostasis and controls the expression of the antimicrobial lectin REG3G in the small intestine. Mediates leukocyte recruitment at the inflammatory site. Functionally, defective in its ability to induce IRAK phosphorylation and NF-kappa-B activation and can function as a negative regulator of activation by IL-1 or lipopolysaccharide (LPS). In Mus musculus (Mouse), this protein is Myeloid differentiation primary response protein MyD88.